The following is a 235-amino-acid chain: MDNDGINADPMELEKFSQLAHHWWDPNSEFKPLHEINPLRLNYIDEIIGGLSEKTVIDVGCGGGILSESMAARGASVTGIDLSDKALKVAKLHLLESGNQVDYRKITVEALATERPRYYDVVTCMEMLEHVPDPASVIQSCARLVKSGGWVFFSTLNRNPKSYLYAIIGAEYILRLLPRGTHEYAKFIKPSELAHMARSAGLMESGIVGMTYNPITKVYALEADTSVNYIMAFRA.

The S-adenosyl-L-methionine site is built by R40, G60, D81, and M125.

This sequence belongs to the methyltransferase superfamily. UbiG/COQ3 family.

It catalyses the reaction a 3-demethylubiquinol + S-adenosyl-L-methionine = a ubiquinol + S-adenosyl-L-homocysteine + H(+). It carries out the reaction a 3-(all-trans-polyprenyl)benzene-1,2-diol + S-adenosyl-L-methionine = a 2-methoxy-6-(all-trans-polyprenyl)phenol + S-adenosyl-L-homocysteine + H(+). It functions in the pathway cofactor biosynthesis; ubiquinone biosynthesis. In terms of biological role, O-methyltransferase that catalyzes the 2 O-methylation steps in the ubiquinone biosynthetic pathway. In Nitrosomonas europaea (strain ATCC 19718 / CIP 103999 / KCTC 2705 / NBRC 14298), this protein is Ubiquinone biosynthesis O-methyltransferase.